Reading from the N-terminus, the 288-residue chain is 2-hydroxy-6-oxononadienedioate/2-hydroxy-6-oxononatrienedioate hydrolase (288 aa).

Catalysis depends on histidine 267, which acts as the Proton acceptor.

It belongs to the AB hydrolase superfamily. MhpC family. As to quaternary structure, homodimer.

It carries out the reaction (2Z,4E)-2-hydroxy-6-oxonona-2,4-dienedioate + H2O = (2Z)-2-hydroxypenta-2,4-dienoate + succinate + H(+). The catalysed reaction is (2Z,4E,7E)-2-hydroxy-6-oxonona-2,4,7-trienedioate + H2O = (2Z)-2-hydroxypenta-2,4-dienoate + fumarate + H(+). It participates in aromatic compound metabolism; 3-phenylpropanoate degradation. In terms of biological role, catalyzes the cleavage of the C5-C6 bond of 2-hydroxy-6-oxononadienedioate and 2-hydroxy-6-oxononatrienedioate, a dienol ring fission product of the bacterial meta-cleavage pathway for degradation of phenylpropionic acid. This Escherichia coli (strain K12 / DH10B) protein is 2-hydroxy-6-oxononadienedioate/2-hydroxy-6-oxononatrienedioate hydrolase.